Here is a 411-residue protein sequence, read N- to C-terminus: Mitotic apparatus protein p62 (411 aa).

Composition is skewed to acidic residues over residues 134 to 156, 183 to 201, and 246 to 321; these read AYEV…EEEE, ELDE…EEEI, and DDDE…EEDS. The tract at residues 134–378 is disordered; the sequence is AYEVGDEDLE…KSPSKPKKEE (245 aa). Basic and acidic residues predominate over residues 351–367; the sequence is GMKEKKTYSLEDMKQDL.

This sequence belongs to the nucleoplasmin family. Post-translationally, phosphorylated by CaM-kinase II in vitro.

It is found in the nucleus. In terms of biological role, required for mitotic progression. Binds to chromatin. The polypeptide is Mitotic apparatus protein p62 (Lytechinus pictus (Painted sea urchin)).